The chain runs to 275 residues: MRAYRVAYDGQPYHGFQRQPDVDTVEGRLRSALVRLGVCERGEGLPDRYAAAGRTDAGVSARTQTVAFDAPAWLSPAAFNGELPNDVRVWASADVPEDFHATHDAAERTYTYYLYAPADADRPEHEPVDDGRWADAVDALAGTHDFHNLTTDETGTERTVAIDWTRDGQFLVVQLTAGGFCRQLVRRLVSLAAAVADGSAPLSKVDRILSPEPVSGPDGVPPAPPEPLVLTDVRYPNVSFTRDEDAAVDARTVFARRRATARTTARVADHITDGL.

D56 functions as the Nucleophile in the catalytic mechanism. Y110 serves as a coordination point for substrate.

It belongs to the tRNA pseudouridine synthase TruA family.

The enzyme catalyses uridine(38/39/40) in tRNA = pseudouridine(38/39/40) in tRNA. Its function is as follows. Formation of pseudouridine at positions 38, 39 and 40 in the anticodon stem and loop of transfer RNAs. The protein is tRNA pseudouridine synthase A of Haloarcula marismortui (strain ATCC 43049 / DSM 3752 / JCM 8966 / VKM B-1809) (Halobacterium marismortui).